Consider the following 75-residue polypeptide: MNLRLSCLLFILVTSLPAGRCSIGNKGISFETCTAIEGLCFFGCKLGWVWIAYCNNIMSCCRKDTDFVLPQTKGI.

The first 21 residues, Met1–Cys21, serve as a signal peptide directing secretion. 3 cysteine pairs are disulfide-bonded: Cys33/Cys60, Cys40/Cys54, and Cys44/Cys61.

It belongs to the beta-defensin family. As to expression, epididymis-specific, with highest levels in the initial segment and distal caput.

Its subcellular location is the secreted. Has bactericidal activity. May play a role in the antimicrobial protection of sperm and urogenital tract epithelia. This Mus musculus (Mouse) protein is Beta-defensin 42.